The following is a 312-amino-acid chain: MTKSVTVKDLKERLNLELICSETGLERPISTSDLSRPGLELTGFFSYYPEDRVQLFGMTEISFSEGMEPEERLKRYKQMCTKRTPAFVISRNLEVPKELVAAAKEADIPVLRSRLKTTRLSVYITNYLESRLAPVISMHGVLVDIYGLGVLITGSSGVGKSETALELVKRGHRLVADDNVEIRQEDEMTLIGSSPAIIEHLLEIRGLGIINVMTLFGAGAVRSSKKITIVVHLENWDPDKHYDRVGLDQEKTKIFDMDIPKITVPVRPGRNLSVIIEVAAMNFRLKNMGYNAAEQFTQDLNNLIGHNSSMND.

Active-site residues include His-139 and Lys-160. ATP is bound at residue 154–161; the sequence is GSSGVGKS. Ser-161 lines the Mg(2+) pocket. The Proton acceptor; for phosphorylation activity. Proton donor; for dephosphorylation activity role is filled by Asp-178. The important for the catalytic mechanism of both phosphorylation and dephosphorylation stretch occupies residues 202–211; it reads LEIRGLGIIN. Glu-203 is a Mg(2+) binding site. Residue Arg-244 is part of the active site. The interval 265-270 is important for the catalytic mechanism of dephosphorylation; it reads PVRPGR.

The protein belongs to the HPrK/P family. As to quaternary structure, homohexamer. The cofactor is Mg(2+).

The enzyme catalyses [HPr protein]-L-serine + ATP = [HPr protein]-O-phospho-L-serine + ADP + H(+). It catalyses the reaction [HPr protein]-O-phospho-L-serine + phosphate + H(+) = [HPr protein]-L-serine + diphosphate. Functionally, catalyzes the ATP- as well as the pyrophosphate-dependent phosphorylation of a specific serine residue in HPr, a phosphocarrier protein of the phosphoenolpyruvate-dependent sugar phosphotransferase system (PTS). HprK/P also catalyzes the pyrophosphate-producing, inorganic phosphate-dependent dephosphorylation (phosphorolysis) of seryl-phosphorylated HPr (P-Ser-HPr). The two antagonistic activities of HprK/P are regulated by several intracellular metabolites, which change their concentration in response to the absence or presence of rapidly metabolisable carbon sources (glucose, fructose, etc.) in the growth medium. Therefore, by controlling the phosphorylation state of HPr, HPrK/P is a sensor enzyme that plays a major role in the regulation of carbon metabolism and sugar transport: it mediates carbon catabolite repression (CCR), and regulates PTS-catalyzed carbohydrate uptake and inducer exclusion. This chain is HPr kinase/phosphorylase, found in Listeria monocytogenes serotype 4b (strain CLIP80459).